We begin with the raw amino-acid sequence, 262 residues long: Nitrate transport protein NasD (262 aa).

The ABC transporter domain maps to 5–239; the sequence is IQVQGVSQRF…RPRNRVQLAD (235 aa). ATP is bound at residue 41–48; it reads GHSGCGKS.

It belongs to the ABC transporter superfamily.

The protein localises to the cell membrane. Functionally, probably part of a high-affinity binding-protein-dependent transport system for nitrate. Probably responsible for energy coupling to the transport system. This chain is Nitrate transport protein NasD (nasD), found in Klebsiella oxytoca.